The primary structure comprises 47 residues: Putative beta-neurotoxin (47 aa).

An LCN-type CS-alpha/beta domain is found at 1 to 47 (KEGYMGSDGCKMSCVINDQFCDTECQAKLKGSTGYCYFXGLACYXXG). Cystine bridges form between C14/C36 and C21/C43.

In terms of tissue distribution, expressed by the venom gland.

The protein localises to the secreted. In terms of biological role, causes transient paralysis of the rear legs of and spasms in insects (A.domestica). The protein is Putative beta-neurotoxin of Rhopalurus junceus (Caribbean blue scorpion).